Here is a 987-residue protein sequence, read N- to C-terminus: Sarcosine oxidase subunit alpha (987 aa).

NAD(+) is bound by residues Asp198, Glu199, Ser206, Ala244, and Gly445. Residues Thr714 and Glu806 each coordinate (6R)-5,10-methylene-5,6,7,8-tetrahydrofolate.

The protein belongs to the GcvT family. Heterotetramer composed of subunits alpha (SoxA), beta (SoxB), gamma (SoxG) and delta (SoxD). NAD(+) is required as a cofactor.

The protein resides in the cytoplasm. The enzyme catalyses sarcosine + (6S)-5,6,7,8-tetrahydrofolate + O2 = (6R)-5,10-methylene-5,6,7,8-tetrahydrofolate + glycine + H2O2. The catalysed reaction is sarcosine + O2 + H2O = formaldehyde + glycine + H2O2. In the presence of tetrahydrofolate, catalyzes the oxidative demethylation of sarcosine to yield glycine, 5,10-methylenetetrahydrofolate and hydrogen peroxide. In the absence of tetrahydrofolate, catalyzes the oxidative demethylation of sarcosine to yield glycine, formaldehyde and hydrogen peroxide. The protein is Sarcosine oxidase subunit alpha (soxA) of Rhizobium meliloti (strain 1021) (Ensifer meliloti).